The chain runs to 150 residues: 3-hydroxyacyl-[acyl-carrier-protein] dehydratase FabZ (150 aa).

Histidine 52 is an active-site residue.

The protein belongs to the thioester dehydratase family. FabZ subfamily.

It is found in the cytoplasm. The catalysed reaction is a (3R)-hydroxyacyl-[ACP] = a (2E)-enoyl-[ACP] + H2O. Involved in unsaturated fatty acids biosynthesis. Catalyzes the dehydration of short chain beta-hydroxyacyl-ACPs and long chain saturated and unsaturated beta-hydroxyacyl-ACPs. The polypeptide is 3-hydroxyacyl-[acyl-carrier-protein] dehydratase FabZ (Variovorax paradoxus (strain S110)).